Consider the following 792-residue polypeptide: Endonuclease MutS2 (792 aa).

344–351 lines the ATP pocket; it reads GPNTGGKT. The region spanning 716–791 is the Smr domain; sequence IHLRGLHVEE…GLGVTVVYLE (76 aa).

Belongs to the DNA mismatch repair MutS family. MutS2 subfamily. As to quaternary structure, homodimer. Binds to stalled ribosomes, contacting rRNA.

In terms of biological role, endonuclease that is involved in the suppression of homologous recombination and thus may have a key role in the control of bacterial genetic diversity. Acts as a ribosome collision sensor, splitting the ribosome into its 2 subunits. Detects stalled/collided 70S ribosomes which it binds and splits by an ATP-hydrolysis driven conformational change. Acts upstream of the ribosome quality control system (RQC), a ribosome-associated complex that mediates the extraction of incompletely synthesized nascent chains from stalled ribosomes and their subsequent degradation. Probably generates substrates for RQC. This Thermomicrobium roseum (strain ATCC 27502 / DSM 5159 / P-2) protein is Endonuclease MutS2.